A 123-amino-acid chain; its full sequence is Small ribosomal subunit protein uS12 (123 aa).

A disordered region spans residues 1–30 (MPTIQQLIRKPRQPKIKRSKSQHMEGCPQK). Residues 9–21 (RKPRQPKIKRSKS) show a composition bias toward basic residues. Asp89 carries the post-translational modification 3-methylthioaspartic acid. Residues 104–123 (TQGVKDRRQRRSKYGAKRPK) are disordered. The span at 110–123 (RRQRRSKYGAKRPK) shows a compositional bias: basic residues.

It belongs to the universal ribosomal protein uS12 family. As to quaternary structure, part of the 30S ribosomal subunit. Contacts proteins S8 and S17. May interact with IF1 in the 30S initiation complex.

In terms of biological role, with S4 and S5 plays an important role in translational accuracy. Interacts with and stabilizes bases of the 16S rRNA that are involved in tRNA selection in the A site and with the mRNA backbone. Located at the interface of the 30S and 50S subunits, it traverses the body of the 30S subunit contacting proteins on the other side and probably holding the rRNA structure together. The combined cluster of proteins S8, S12 and S17 appears to hold together the shoulder and platform of the 30S subunit. In Jannaschia sp. (strain CCS1), this protein is Small ribosomal subunit protein uS12.